A 369-amino-acid chain; its full sequence is 4-hydroxy-3-methylbut-2-en-1-yl diphosphate synthase (flavodoxin) (369 aa).

[4Fe-4S] cluster-binding residues include Cys268, Cys271, Cys303, and Glu310.

It belongs to the IspG family. [4Fe-4S] cluster serves as cofactor.

It carries out the reaction (2E)-4-hydroxy-3-methylbut-2-enyl diphosphate + oxidized [flavodoxin] + H2O + 2 H(+) = 2-C-methyl-D-erythritol 2,4-cyclic diphosphate + reduced [flavodoxin]. Its pathway is isoprenoid biosynthesis; isopentenyl diphosphate biosynthesis via DXP pathway; isopentenyl diphosphate from 1-deoxy-D-xylulose 5-phosphate: step 5/6. In terms of biological role, converts 2C-methyl-D-erythritol 2,4-cyclodiphosphate (ME-2,4cPP) into 1-hydroxy-2-methyl-2-(E)-butenyl 4-diphosphate. This is 4-hydroxy-3-methylbut-2-en-1-yl diphosphate synthase (flavodoxin) from Exiguobacterium sibiricum (strain DSM 17290 / CCUG 55495 / CIP 109462 / JCM 13490 / 255-15).